The following is a 430-amino-acid chain: MSVLLRGVRLYGEGEQVDVLVEGEQIANIGAGIDIPDTADVIDAIDQVLLPGLVDLHTHLREPGREYAEDIETGSAAAALGGYTAVFAMPNTTPVADSPVVTDHVWRRGQQVGLVDVHPVGAVTVGLAGAELTEMGMMAAGAAQVRIFSDDGNCVHNPLVMRRALEYATGLGVLIAQHAEEPRLTVGAVAHEGPTAARLGLSGWPRAAEESIVARDALLARDAGARVHICHASTAGTVEILKWAKEQGISITAEVTPHHLLLDDSRLASYDGVNRVNPPLRETADAVALRQALADGIIDCVTTDHAPHADHEKCVEFSAARPGMLGLQTALSVVVHTMVVPGLLSWRDVAQVMSENPARIAGLPDHGRPLEVGEPANLTVVDPDVTWTVTGDGLASRSANTPYEAMTLPATVTATLLRGKVTARGQKSPV.

The Zn(2+) site is built by H57 and H59. Substrate is bound by residues 59 to 61 (HLR) and N91. The Zn(2+) site is built by D151, H178, and H231. N277 provides a ligand contact to substrate. D304 contributes to the Zn(2+) binding site. D304 is a catalytic residue. Substrate contacts are provided by residues H308 and 322–323 (PG).

The protein belongs to the metallo-dependent hydrolases superfamily. DHOase family. Class I DHOase subfamily. Zn(2+) serves as cofactor.

It catalyses the reaction (S)-dihydroorotate + H2O = N-carbamoyl-L-aspartate + H(+). It functions in the pathway pyrimidine metabolism; UMP biosynthesis via de novo pathway; (S)-dihydroorotate from bicarbonate: step 3/3. In terms of biological role, catalyzes the reversible cyclization of carbamoyl aspartate to dihydroorotate. This is Dihydroorotase from Mycobacterium leprae (strain TN).